The following is a 180-amino-acid chain: Hypoxanthine-guanine phosphoribosyltransferase (180 aa).

GMP-binding positions include Lys-40, 99–107 (EDIVDSGLT), Lys-131, and Asp-159. Catalysis depends on Asp-103, which acts as the Proton acceptor. Mg(2+) is bound at residue Asp-159.

It belongs to the purine/pyrimidine phosphoribosyltransferase family. Mg(2+) serves as cofactor.

The protein resides in the cytoplasm. The catalysed reaction is IMP + diphosphate = hypoxanthine + 5-phospho-alpha-D-ribose 1-diphosphate. It carries out the reaction GMP + diphosphate = guanine + 5-phospho-alpha-D-ribose 1-diphosphate. Its pathway is purine metabolism; IMP biosynthesis via salvage pathway; IMP from hypoxanthine: step 1/1. In terms of biological role, converts guanine to guanosine monophosphate, and hypoxanthine to inosine monophosphate. Transfers the 5-phosphoribosyl group from 5-phosphoribosylpyrophosphate onto the purine. Plays a central role in the generation of purine nucleotides through the purine salvage pathway. This chain is Hypoxanthine-guanine phosphoribosyltransferase (hprT), found in Dictyostelium discoideum (Social amoeba).